The primary structure comprises 190 residues: Peptidyl-tRNA hydrolase (190 aa).

Phe14 is a tRNA binding site. The Proton acceptor role is filled by His19. TRNA-binding residues include Met64, Asn66, and Asn112.

It belongs to the PTH family. Monomer.

Its subcellular location is the cytoplasm. It carries out the reaction an N-acyl-L-alpha-aminoacyl-tRNA + H2O = an N-acyl-L-amino acid + a tRNA + H(+). Its function is as follows. Hydrolyzes ribosome-free peptidyl-tRNAs (with 1 or more amino acids incorporated), which drop off the ribosome during protein synthesis, or as a result of ribosome stalling. Catalyzes the release of premature peptidyl moieties from peptidyl-tRNA molecules trapped in stalled 50S ribosomal subunits, and thus maintains levels of free tRNAs and 50S ribosomes. The chain is Peptidyl-tRNA hydrolase from Staphylococcus aureus (strain bovine RF122 / ET3-1).